We begin with the raw amino-acid sequence, 394 residues long: MGGAAARLGAVILFVVIVGLHGVRSKYALVDASLKMADPNRFRGKDLPVLDQLTDPPGVRRVYHIQAGLPDPFQPPSLPITVYYAVLERACRSVLLNAPSEAPQIVRGASEDVRKQPYNLTIAWFRMGGNCAIPITVMEYTECSYNKSLGACPIRTQPRWNYYDSFSAVSEDNLGFLMHAPAFETAGTYLRLVKINDWTEITQFILEHRAKGSCKYALPLRIPPSACLSPQAYQQGVTVDSIGMLPRFIPENQRTVAVYSLKIAGWHGPKAPYTSTLLPPELSETPNATQPELAPEDPEDSALLEDPVGTVAPQIPPNWHIPSIQDAATPYHPPATPNNMGLIAGAVGGSLLAALVICGIVYWMRRHTQKAPKRIRLPHIREDDQPSSHQPLFY.

Residues 1 to 25 (MGGAAARLGAVILFVVIVGLHGVRS) form the signal peptide. The segment at 26 to 57 (KYALVDASLKMADPNRFRGKDLPVLDQLTDPP) is interaction with TNFRSF14. Residues 26 to 340 (KYALVDASLK…YHPPATPNNM (315 aa)) lie on the Virion surface side of the membrane. Residue His64 coordinates Zn(2+). Cystine bridges form between Cys91/Cys214, Cys131/Cys227, and Cys143/Cys152. Asn119 and Asn146 each carry an N-linked (GlcNAc...) asparagine; by host glycan. Asp240 lines the Zn(2+) pocket. Positions 261-305 (LKIAGWHGPKAPYTSTLLPPELSETPNATQPELAPEDPEDSALLE) are profusion. The segment at 275–301 (STLLPPELSETPNATQPELAPEDPEDS) is disordered. Residue Asn287 is glycosylated (N-linked (GlcNAc...) asparagine; by host). The chain crosses the membrane as a helical span at residues 341-361 (GLIAGAVGGSLLAALVICGIV). The Intravirion segment spans residues 362-394 (YWMRRHTQKAPKRIRLPHIREDDQPSSHQPLFY). Residues 375-394 (IRLPHIREDDQPSSHQPLFY) form a disordered region.

It belongs to the herpesviridae glycoprotein D family. In terms of assembly, homodimer. Interacts with host receptor TNFRSF14. Interacts with host receptor NECTIN1. Interacts (via profusion domain) with gB; this interaction occurs in the absence of gH/gL. Interacts (via profusion domain) with gH/gL heterodimer; this interaction occurs in the absence of gB. Associates with the gB-gH/gL-gD complex. Interacts (via C-terminus) with UL11 tegument protein. Interacts (via C-terminus) with VP22 tegument protein; this interaction has been demonstrated in other strains, but might be very weak since PubMed:19279114 has failed to see it. Interacts with host RSAD2.

The protein localises to the virion membrane. It is found in the host Golgi apparatus. Its function is as follows. Envelope glycoprotein that binds to the host cell entry receptors NECTIN1, TNFRSF14/HVEM and 3-O-sulfated heparan sulfate, promoting the virus entry into host cells. May trigger fusion with host membrane, by recruiting the fusion machinery composed of gB and gH/gL. The chain is Envelope glycoprotein D (gD) from Homo sapiens (Human).